The primary structure comprises 218 residues: GTP cyclohydrolase 1 (218 aa).

3 residues coordinate Zn(2+): Cys109, His112, and Cys180.

The protein belongs to the GTP cyclohydrolase I family. In terms of assembly, toroid-shaped homodecamer, composed of two pentamers of five dimers.

It carries out the reaction GTP + H2O = 7,8-dihydroneopterin 3'-triphosphate + formate + H(+). Its pathway is cofactor biosynthesis; 7,8-dihydroneopterin triphosphate biosynthesis; 7,8-dihydroneopterin triphosphate from GTP: step 1/1. This is GTP cyclohydrolase 1 (folE) from Haemophilus influenzae (strain ATCC 51907 / DSM 11121 / KW20 / Rd).